A 394-amino-acid polypeptide reads, in one-letter code: MEVPPPLVLKRPLYVPSKTLMGPGPSNCSHRVLEAMSNPVLGHMHPECLQIMDEVKEGIKYIFQTLNDATMCISGAGHSGMEAALCNLIEDGDVVLMGITGVWGHRAGDMARRYGAEVHYVEASFGRALSHEEITFAFEAHRPKVFFIAQGDSSTGIIQQNIRELGELCRKYDCFLIVDTVASLGGTEFLMDEWKVDVAYTGSQKSLGGPAGLTPISFSKRALTRIRKRKTKPKVYYFDILLIGQYWGCYGTPRIYHHTISSTLLYGLREALAHFCAVGLKAVVRRHQECSKRLQLGIEELGLEMFVSREEERLPTVNTIKVPFGVDWKKVAEYAMRKYSVEISGGLGPTVEHVFRIGLMGENATVERVDMVLSILNEAIQSSKLGIKTDLSKI.

Residues 76-78 (AGH), Ser-153, and Gln-204 each bind pyridoxal 5'-phosphate. Ser-153 contributes to the substrate binding site. The residue at position 205 (Lys-205) is an N6-(pyridoxal phosphate)lysine. Tyr-256 and Thr-259 together coordinate pyridoxal 5'-phosphate. Arg-356 contacts substrate.

Belongs to the class-V pyridoxal-phosphate-dependent aminotransferase family. In terms of assembly, homodimer. It depends on pyridoxal 5'-phosphate as a cofactor.

The protein localises to the peroxisome. The catalysed reaction is glyoxylate + L-alanine = glycine + pyruvate. It catalyses the reaction (2S)-2-aminobutanoate + glyoxylate = 2-oxobutanoate + glycine. It carries out the reaction glyoxylate + L-phenylalanine = 3-phenylpyruvate + glycine. The enzyme catalyses glyoxylate + L-serine = 3-hydroxypyruvate + glycine. The catalysed reaction is 2-oxobutanoate + L-alanine = (2S)-2-aminobutanoate + pyruvate. It catalyses the reaction L-phenylalanine + pyruvate = 3-phenylpyruvate + L-alanine. It carries out the reaction L-serine + pyruvate = 3-hydroxypyruvate + L-alanine. In terms of biological role, catalyzes the pyridoxal 5'-phosphate-dependent transamination of alanine with glyoxylate as an amino group acceptor. Can also catalyze, although with much less efficiency, the transamination of amino-butyrate, phenylalanine and serine with glyoxylate or pyruvate as an amino group acceptor. Does not catalyze the transamination of both 3-hydroxykynurenine and L-kynurenine. May play a role in the detoxification of glyoxylate, a toxic plant metabolite from the fly diet. The polypeptide is Alanine--glyoxylate aminotransferase (Drosophila melanogaster (Fruit fly)).